Here is a 780-residue protein sequence, read N- to C-terminus: MLCSRYFTSSLFLWGEALPTLLEEFLNEVEKMLKNQVNTRRIHQLLKELDDPLLENKDLEEKLQAFLDYVKEIPNLPEARKRYRIQKSLEMIEKLRSWFLIDYLECSGEEVDLSTDIQYAKGVGPNRKKKLKKLGIETLRDLLEFFPRDYEDRRKIFKLNDLLPGEKVTTQGKIVSVETKKFQNMNILTAVLSDGLVHVPLKWFNQDYLQTYLKQLTGKEVFVTGTVKSNAYTGQYEIHNAEVTPKEGEYVRRILPIYRLTSGISQKQMRKIFEENIPSLCCSLKETLPERILEKRKLLGVKDAYYGMHFPKTFYHLEKARERLAYEELFVLQLAFQKIRKEREKHGGIPKKIEGKLAEEFIKSLPFKLTNAQKRAHQEIRNDMISEKPMNRLLQGDVGSGKTVVAQLAILDNYEAGFQTAFMVPTSILAIQHYRRTVESFSKFNIHVALLIGATTPSEKEKIKSGLRNGQIDVVIGTHALIQEDVHFKNLGLVIIDEQHRFGVKQREALMNKGKMVDTLVMSATPIPRSMALAFYGDLDVTVIDEMPPGRKEVQTMLVPMDRVNEVYEFVRQEVMRGGQAFIVYPLIEESDKLNVKSAVEMYEYLSKEVFPEFKLGLMHGRLSQEEKDRVMLEFAEGRYDILVSTTVIEVGIDVPRANVMVIENPERFGLAQLHQLRGRVGRGGQEAYCFLVVGDVGEEAMERLRFFTLNTDGFKIAEYDLKTRGPGEFFGVKQHGLSGFKVADLYRDLKLLEWAREDVQEIDVEGIELPEEIKLIEVG.

Domain regions lie at residues 1 to 350 (MLCS…GGIP), 351 to 549 (KKIE…EMPP), and 550 to 780 (GRKE…IEVG). Positions 154-252 (RKIFKLNDLL…VTPKEGEYVR (99 aa)) are wedge domain. The ATP site is built by Phe367, Leu369, Gly399, Ser400, Gly401, Lys402, Thr403, and Arg436. The 162-residue stretch at 383 to 544 (DMISEKPMNR…FYGDLDVTVI (162 aa)) folds into the Helicase ATP-binding domain. Residues 497–500 (DEQH) carry the DEAH box motif. One can recognise a Helicase C-terminal domain in the interval 563–728 (RVNEVYEFVR…EYDLKTRGPG (166 aa)).

The protein belongs to the helicase family. RecG subfamily. As to quaternary structure, monomer.

The catalysed reaction is Couples ATP hydrolysis with the unwinding of duplex DNA by translocating in the 3'-5' direction.. It carries out the reaction ATP + H2O = ADP + phosphate + H(+). In terms of biological role, plays a critical role in recombination and DNA repair. Helps process Holliday junction intermediates to mature products by catalyzing branch migration. Has replication fork (Y-DNA) regression activity, unwinds stalled or blocked replication forks to make a HJ that can be resolved. Has a DNA unwinding activity characteristic of a DNA helicase with 3'-5' polarity. Might be a DNA translocase rather than a bona fide helicase. In Thermotoga maritima (strain ATCC 43589 / DSM 3109 / JCM 10099 / NBRC 100826 / MSB8), this protein is ATP-dependent DNA helicase RecG.